Here is a 115-residue protein sequence, read N- to C-terminus: Ribonuclease P protein component (115 aa).

This sequence belongs to the RnpA family. In terms of assembly, consists of a catalytic RNA component (M1 or rnpB) and a protein subunit.

It carries out the reaction Endonucleolytic cleavage of RNA, removing 5'-extranucleotides from tRNA precursor.. Functionally, RNaseP catalyzes the removal of the 5'-leader sequence from pre-tRNA to produce the mature 5'-terminus. It can also cleave other RNA substrates such as 4.5S RNA. The protein component plays an auxiliary but essential role in vivo by binding to the 5'-leader sequence and broadening the substrate specificity of the ribozyme. The sequence is that of Ribonuclease P protein component from Natranaerobius thermophilus (strain ATCC BAA-1301 / DSM 18059 / JW/NM-WN-LF).